The sequence spans 415 residues: Probable peptidoglycan glycosyltransferase FtsW (415 aa).

Helical transmembrane passes span 31–51 (PILM…VTSA), 63–83 (FFFV…TVWL), 97–117 (LWIL…GIGH), 133–153 (IQVS…YIAT), 162–182 (ITGM…LLLQ), 185–205 (FGTT…ARAQ), 206–226 (WQMM…VVLS), 245–265 (FGHG…GVWG), 285–305 (FIFA…LIGL), 326–346 (IAGA…ALIN), and 361–381 (LPLM…LGFL).

Belongs to the SEDS family. FtsW subfamily.

It is found in the cell inner membrane. The catalysed reaction is [GlcNAc-(1-&gt;4)-Mur2Ac(oyl-L-Ala-gamma-D-Glu-L-Lys-D-Ala-D-Ala)](n)-di-trans,octa-cis-undecaprenyl diphosphate + beta-D-GlcNAc-(1-&gt;4)-Mur2Ac(oyl-L-Ala-gamma-D-Glu-L-Lys-D-Ala-D-Ala)-di-trans,octa-cis-undecaprenyl diphosphate = [GlcNAc-(1-&gt;4)-Mur2Ac(oyl-L-Ala-gamma-D-Glu-L-Lys-D-Ala-D-Ala)](n+1)-di-trans,octa-cis-undecaprenyl diphosphate + di-trans,octa-cis-undecaprenyl diphosphate + H(+). Its pathway is cell wall biogenesis; peptidoglycan biosynthesis. Functionally, peptidoglycan polymerase that is essential for cell division. The sequence is that of Probable peptidoglycan glycosyltransferase FtsW from Halothiobacillus neapolitanus (strain ATCC 23641 / c2) (Thiobacillus neapolitanus).